Consider the following 843-residue polypeptide: Structure-specific endonuclease subunit SLX4 (843 aa).

Disordered regions lie at residues 26–111, 281–313, 339–377, 603–655, and 729–748; these read SPPS…KTTT, AIPTPTESSTTEDIQGSSSKQQRVKAKKPQKGK, NVAPKSPGRKNISNRPSGMKHSNSGRGKSSTLKNDNGPP, SKTF…AKAL, and ATPNARHSRQRSSSTSFSIE. 2 stretches are compositionally biased toward polar residues: residues 50–69 and 285–301; these read ASFSKTPSRKTTSPDSNGEN and PTESSTTEDIQGSSSKQ. A compositionally biased stretch (basic residues) spans 302-311; sequence QRVKAKKPQK. Composition is skewed to polar residues over residues 349-372 and 603-616; these read NISNRPSGMKHSNSGRGKSSTLKN and SKTFMPESKPNQGT. The span at 617–636 shows a compositional bias: basic and acidic residues; it reads DDARKNGFRKENHSDVRVRP. The segment covering 739–748 has biased composition (low complexity); sequence RSSSTSFSIE.

It belongs to the SLX4 family. In terms of assembly, forms a heterodimer with SLX1. In terms of processing, phosphorylated in response to DNA damage.

The protein resides in the nucleus. Regulatory subunit of the SLX1-SLX4 structure-specific endonuclease that resolves DNA secondary structures generated during DNA repair and recombination. Has endonuclease activity towards branched DNA substrates, introducing single-strand cuts in duplex DNA close to junctions with ss-DNA. The protein is Structure-specific endonuclease subunit SLX4 of Ajellomyces capsulatus (strain G186AR / H82 / ATCC MYA-2454 / RMSCC 2432) (Darling's disease fungus).